Consider the following 415-residue polypeptide: Granaticin polyketide putative beta-ketoacyl synthase 2 (415 aa).

The 401-residue stretch at 6 to 406 (RRRAVVTGLS…GFNSAVVVTL (401 aa)) folds into the Ketosynthase family 3 (KS3) domain.

The protein belongs to the thiolase-like superfamily. Beta-ketoacyl-ACP synthases family.

Its pathway is antibiotic biosynthesis; granaticin biosynthesis. This Streptomyces violaceoruber protein is Granaticin polyketide putative beta-ketoacyl synthase 2 (gra-orf2).